Reading from the N-terminus, the 954-residue chain is MSQTPSSLRDLEHHSAFVERHIGPNDAEIAQMLDVVGHACLDALTDAIVPGNIKSPAPLALPEAITEEEALAKIRAIADKNTVFRNFIGQGYYGTHTPKVILRNILENPAWYTAYTPYQAEISQGRMEALINFQTLCADLTGMQIANASLLDEATAAAEAMTLAKRSAKSRSNTFFVHDAVHPQTLELLRTRAEPLDIVLRVGTPEEALQAECFGVLLQYPDSFGHIGDHAALADAVHAQGGLVAVATDLLALTLIAAPGEWGADIVVGNSQRFGVPFGFGGPHAAFMACRDAYKRSMPGRLIGVSIDAAGNPAYRLTLQTREQHIRREKATSNICTAQVLLAVMASMYAVYHGPDGLTRIARRTHRLAAILAAALRSAGVTVGERFFDTLHVKAIDANAIHARARAAGINLRAIDSEAVGISLDETSTRADVVALAALFGAQADVDALDAATADALPQGLLRTTPFLTHPVFNTHHSEHELLRYMRSLADKDLAMDRTMIPLGSCTMKLNATAEMIPVTWPEFGAIHPLAPAEQSAGYAQLIDELEAMLVECTGYDAVSLQPNSGAQGEYAGLLAIRAYHRSRGEAHRDICLIPESAHGTNPASAQMCGMTVVVTKCDANGNVDVDDIRAKAEKYSDRLAALMITYPSTHGVFEEDVVAICEAVHAHGGQVYTDGANMNALVGVAKPGKWGSDVSHLNLHKTFCIPHGGGGPGVGPCAVKSHLAPYLPKTLGGEGDVGMVSAASYGSASILPISWMYVTMMGSAGLRKATQVALLNANYIAKRLAPHYKTLYTGRNGLVAHECILDVRPLEKTSGIGAEDIAKRLIDFGFHAPTLSFPVAGTLMVEPTESESQHELDRFIDAMIQIREEIRAIEDGRLDREDNPLKHAPHTATQVSASEWTHAYPRELAAFPLPSLKQQKYWPPVARVDNVYGDKNVMCACIPVDAYKEDVEA.

Lysine 702 carries the N6-(pyridoxal phosphate)lysine modification.

It belongs to the GcvP family. The glycine cleavage system is composed of four proteins: P, T, L and H. It depends on pyridoxal 5'-phosphate as a cofactor.

The catalysed reaction is N(6)-[(R)-lipoyl]-L-lysyl-[glycine-cleavage complex H protein] + glycine + H(+) = N(6)-[(R)-S(8)-aminomethyldihydrolipoyl]-L-lysyl-[glycine-cleavage complex H protein] + CO2. Functionally, the glycine cleavage system catalyzes the degradation of glycine. The P protein binds the alpha-amino group of glycine through its pyridoxal phosphate cofactor; CO(2) is released and the remaining methylamine moiety is then transferred to the lipoamide cofactor of the H protein. The polypeptide is Glycine dehydrogenase (decarboxylating) (Xanthomonas euvesicatoria pv. vesicatoria (strain 85-10) (Xanthomonas campestris pv. vesicatoria)).